The sequence spans 110 residues: Ribonuclease P protein component 1 (110 aa).

This sequence belongs to the eukaryotic/archaeal RNase P protein component 1 family. As to quaternary structure, consists of a catalytic RNA component and at least 4-5 protein subunits.

It is found in the cytoplasm. It carries out the reaction Endonucleolytic cleavage of RNA, removing 5'-extranucleotides from tRNA precursor.. In terms of biological role, part of ribonuclease P, a protein complex that generates mature tRNA molecules by cleaving their 5'-ends. This is Ribonuclease P protein component 1 from Methanosarcina acetivorans (strain ATCC 35395 / DSM 2834 / JCM 12185 / C2A).